Here is a 461-residue protein sequence, read N- to C-terminus: Glutamate-gated chloride channel alpha (461 aa).

The signal sequence occupies residues 1-20 (MATWIVGKLIIASLILGIQA). At 21-275 (QQARTKSQDI…TTIQLKREFS (255 aa)) the chain is on the extracellular side. R98, R117, and S182 together coordinate L-glutamate. A disulfide bridge links C191 with C205. L-glutamate is bound at residue S211. N-linked (GlcNAc...) asparagine glycosylation is present at N246. A disulfide bridge connects residues C252 and C263. Residues 276-298 (FYLLQLYIPSCMLVIVSWVSFWF) traverse the membrane as a helical segment. Residues 299–303 (DRTAI) lie on the Cytoplasmic side of the membrane. The helical transmembrane segment at 304–325 (PARVTLGVTTLLTMTAQSAGIN) threads the bilayer. The Extracellular segment spans residues 326–332 (SQLPPVS). Residues 333-353 (YIKAIDVWIGACMTFIFCALL) traverse the membrane as a helical segment. The Cytoplasmic segment spans residues 354-432 (EFALVNHIAN…EWNDISKRVD (79 aa)). A helical transmembrane segment spans residues 433–454 (LISRALFPVLFFVFNILYWSRF). Over 455–461 (GQQNVLF) the chain is Extracellular.

This sequence belongs to the ligand-gated ion channel (TC 1.A.9) family. Glutamate-gated chloride channel (TC 1.A.9.4) subfamily. As to quaternary structure, pentamer. Homooligomer, forms functional heterooligomers with glc-2.

It is found in the postsynaptic cell membrane. It localises to the cell membrane. In terms of biological role, glutamate-gated chloride channel subunit; channel properties depend on the subunit composition. Glutamate binding triggers a rapidly reversible current in heteromeric channels formed by glc-1 and glc-2, while the anti-helmintic drug ivermectin and other avermectins trigger a permanently open channel configuration. Channels containing only glc-1 are activated by ivermectin, but not by glutamate alone (in vitro). The heteromeric channel formed by glc-1 and glc-2 is also activated by ibotenate, and it is blocked by picrotoxin and flufenamic acid. Plays a role in the regulation of locomotor behavior. The protein is Glutamate-gated chloride channel alpha of Caenorhabditis elegans.